The following is a 116-amino-acid chain: Ribonuclease P protein component (116 aa).

Belongs to the RnpA family. As to quaternary structure, consists of a catalytic RNA component (M1 or rnpB) and a protein subunit.

It carries out the reaction Endonucleolytic cleavage of RNA, removing 5'-extranucleotides from tRNA precursor.. Its function is as follows. RNaseP catalyzes the removal of the 5'-leader sequence from pre-tRNA to produce the mature 5'-terminus. It can also cleave other RNA substrates such as 4.5S RNA. The protein component plays an auxiliary but essential role in vivo by binding to the 5'-leader sequence and broadening the substrate specificity of the ribozyme. The sequence is that of Ribonuclease P protein component from Picosynechococcus sp. (strain ATCC 27264 / PCC 7002 / PR-6) (Agmenellum quadruplicatum).